We begin with the raw amino-acid sequence, 435 residues long: Serine hydroxymethyltransferase (435 aa).

(6S)-5,6,7,8-tetrahydrofolate-binding positions include leucine 133 and 137 to 139 (GHL). Lysine 242 carries the post-translational modification N6-(pyridoxal phosphate)lysine.

The protein belongs to the SHMT family. Homodimer. Pyridoxal 5'-phosphate is required as a cofactor.

The protein resides in the cytoplasm. It carries out the reaction (6R)-5,10-methylene-5,6,7,8-tetrahydrofolate + glycine + H2O = (6S)-5,6,7,8-tetrahydrofolate + L-serine. The protein operates within one-carbon metabolism; tetrahydrofolate interconversion. It participates in amino-acid biosynthesis; glycine biosynthesis; glycine from L-serine: step 1/1. In terms of biological role, catalyzes the reversible interconversion of serine and glycine with tetrahydrofolate (THF) serving as the one-carbon carrier. This reaction serves as the major source of one-carbon groups required for the biosynthesis of purines, thymidylate, methionine, and other important biomolecules. Also exhibits THF-independent aldolase activity toward beta-hydroxyamino acids, producing glycine and aldehydes, via a retro-aldol mechanism. The polypeptide is Serine hydroxymethyltransferase (Sphingopyxis alaskensis (strain DSM 13593 / LMG 18877 / RB2256) (Sphingomonas alaskensis)).